We begin with the raw amino-acid sequence, 243 residues long: Large ribosomal subunit protein uL30 (243 aa).

Residues 1-31 form a disordered region; it reads MADKILTPESQLKKSKAQQKSAEQVAAERAA. Residues 18 to 28 are compositionally biased toward low complexity; sequence QQKSAEQVAAE.

This sequence belongs to the universal ribosomal protein uL30 family.

The polypeptide is Large ribosomal subunit protein uL30 (RPL7) (Eremothecium gossypii (strain ATCC 10895 / CBS 109.51 / FGSC 9923 / NRRL Y-1056) (Yeast)).